The following is a 434-amino-acid chain: Trigger factor (434 aa).

Positions Gly-160–Pro-245 constitute a PPIase FKBP-type domain.

The protein belongs to the FKBP-type PPIase family. Tig subfamily.

The protein resides in the cytoplasm. It catalyses the reaction [protein]-peptidylproline (omega=180) = [protein]-peptidylproline (omega=0). Functionally, involved in protein export. Acts as a chaperone by maintaining the newly synthesized protein in an open conformation. Functions as a peptidyl-prolyl cis-trans isomerase. In Shewanella baltica (strain OS223), this protein is Trigger factor.